The chain runs to 129 residues: Small ribosomal subunit protein uS11 (129 aa).

Belongs to the universal ribosomal protein uS11 family. As to quaternary structure, part of the 30S ribosomal subunit. Interacts with proteins S7 and S18. Binds to IF-3.

Functionally, located on the platform of the 30S subunit, it bridges several disparate RNA helices of the 16S rRNA. Forms part of the Shine-Dalgarno cleft in the 70S ribosome. The chain is Small ribosomal subunit protein uS11 from Desulforamulus reducens (strain ATCC BAA-1160 / DSM 100696 / MI-1) (Desulfotomaculum reducens).